The chain runs to 189 residues: Early E3 20.5 kDa glycoprotein (189 aa).

2 N-linked (GlcNAc...) asparagine; by host glycosylation sites follow: N73 and N137.

The protein belongs to the adenoviridae E3_20 family.

Its function is as follows. E3 proteins seem to be dispensable for virus growth in tissue culture cells. They are potentially important for virus growth under special conditions; E3 region may help adenoviruses to evade the immune surveillance of the host. This chain is Early E3 20.5 kDa glycoprotein, found in Homo sapiens (Human).